A 117-amino-acid chain; its full sequence is G antigen 12B/C/D/E (117 aa).

The disordered stretch occupies residues 1–117; sequence MSWRGRSTYY…PEEGEKQSQC (117 aa). Composition is skewed to acidic residues over residues 32–45 and 87–96; these read FSDE…EEGE and ECEDGPDGQE. Over residues 103–117 the composition is skewed to basic and acidic residues; that stretch reads EEVKTPEEGEKQSQC.

It belongs to the GAGE family.

The sequence is that of G antigen 12B/C/D/E (GAGE12B) from Homo sapiens (Human).